The sequence spans 85 residues: Acyl carrier protein (85 aa).

Residues 4 to 79 enclose the Carrier domain; that stretch reads DELFEKVKEI…NAVNLLSEKL (76 aa). Serine 39 bears the O-(pantetheine 4'-phosphoryl)serine mark.

Belongs to the acyl carrier protein (ACP) family. 4'-phosphopantetheine is transferred from CoA to a specific serine of apo-ACP by AcpS. This modification is essential for activity because fatty acids are bound in thioester linkage to the sulfhydryl of the prosthetic group.

Its subcellular location is the cytoplasm. Its pathway is lipid metabolism; fatty acid biosynthesis. In terms of biological role, carrier of the growing fatty acid chain in fatty acid biosynthesis. In Petrotoga mobilis (strain DSM 10674 / SJ95), this protein is Acyl carrier protein.